Here is a 99-residue protein sequence, read N- to C-terminus: Keratinocyte differentiation-associated protein (99 aa).

The signal sequence occupies residues Met-1–Gly-22.

As to expression, highly expressed in skin, but not detectable in any other tissue examined. Expression restricted to cornified/stratified epithelia and not detected in non-cornified/stratified epithelia.

Its subcellular location is the secreted. May act as a soluble regulator of keratinocyte differentiation. May play an important role in embryonic skin morphogenesis. In Canis lupus familiaris (Dog), this protein is Keratinocyte differentiation-associated protein.